Here is a 464-residue protein sequence, read N- to C-terminus: Centrosomal protein of 55 kDa (464 aa).

Residues 1 to 11 (MSSRSTKDLIK) are compositionally biased toward basic and acidic residues. Residues 1–26 (MSSRSTKDLIKSKWGSKPSNSKSETT) form a disordered region. Coiled coils occupy residues 22–186 (KSET…QWLV), 238–337 (NDLL…FLYT), and 374–403 (QHQL…LHEF). Ser-96 carries the post-translational modification Phosphoserine. An interaction with TSG101 region spans residues 157–236 (PNCFNSSINN…GYLQEEKQKC (80 aa)). Residues 160–214 (FNSSINNIHEMEIQLKDALEKNQQWLVYDQQREVYVKGLLAKIFELEKKTETAAH) form an interaction with PDCD6IP region. The tract at residues 355-464 (QMQACTLDFE…LLVHVEYCSK (110 aa)) is required for localization to the interphase centrosome and to the midbody during cytokinesis. Phosphoserine; by CDK1 and MAPK1 is present on residues Ser-425 and Ser-428. Thr-430 bears the Phosphothreonine mark. Position 436 is a phosphoserine; by PLK1 (Ser-436).

Homodimer. Interacts (phosphorylated on Ser-425 and Ser-428) with PLK1; the interaction is indirect via the MTMR3:MTMR4 heterooligomer, occurs during early mitosis, regulates the phosphorylation of CEP55 by PLK1 and its recruitment to the midbody where it can mediate cell abscission. Interacts with AKAP9/CG-NAP; the interaction occurs in interphase and is lost upon mitotic entry. Interacts with PCNT/Kendrin; the interaction occurs in interphase and is lost upon mitotic entry. Directly interacts with PDCD6IP; this interaction is required for PDCD6IP targeting to the midbody; CEP55 binds PDCD6IP in a 2:1 stoichiometry; PDCD6IP competes with TSG101 for the same binding site. Interacts with TSG101; TSG101 competes with PDCD6IP for the same binding site; interaction is required for cytokinesis but not for viral budding. Interacts with MVB12A, VPS37B, VPS37C and VPS28. There is a hierachy of phosphorylation, where both Ser-425 and Ser-428 are phosphorylated at the onset of mitosis, prior to Ser-436. Phosphorylation at Ser-425 and Ser-428 is required for dissociation from the centrosome at the G2/M boundary. Phosphorylation at the 3 sites, Ser-425, Ser-428 and Ser-436, is required for protein function at the final stages of cell division to complete cytokinesis successfully. As to expression, expressed in embryonic brain. Expressed in fetal brain ganglionic eminence, kidney tubules and multinucleate neurons in the temporal cortex. Expressed in adult brain, cerebellum, kidney tubules, intestine and muscles (at protein level). Widely expressed, mostly in proliferative tissues. Highly expressed in testis. Intermediate levels in adult and fetal thymus, as well as in various cancer cell lines. Low levels in different parts of the digestive tract, bone marrow, lymph nodes, placenta, fetal heart and fetal spleen. Hardly detected in brain.

It is found in the cytoplasm. The protein localises to the cytoskeleton. The protein resides in the microtubule organizing center. Its subcellular location is the centrosome. It localises to the centriole. It is found in the cleavage furrow. The protein localises to the midbody. The protein resides in the midbody ring. Functionally, plays a role in mitotic exit and cytokinesis. Recruits PDCD6IP and TSG101 to midbody during cytokinesis. Required for successful completion of cytokinesis. Not required for microtubule nucleation. Plays a role in the development of the brain and kidney. This is Centrosomal protein of 55 kDa from Homo sapiens (Human).